The sequence spans 361 residues: Queuine tRNA-ribosyltransferase (361 aa).

The active-site Proton acceptor is D92. Substrate-binding positions include 92–96 (DSGGF), D146, Q189, and G216. Positions 247 to 253 (GVGKPSD) are RNA binding. The active-site Nucleophile is the D266. Residues 271–275 (TRSGR) are RNA binding; important for wobble base 34 recognition. Residues C304, C306, C309, and H335 each coordinate Zn(2+).

The protein belongs to the queuine tRNA-ribosyltransferase family. Homodimer. Within each dimer, one monomer is responsible for RNA recognition and catalysis, while the other monomer binds to the replacement base PreQ1. It depends on Zn(2+) as a cofactor.

It catalyses the reaction 7-aminomethyl-7-carbaguanine + guanosine(34) in tRNA = 7-aminomethyl-7-carbaguanosine(34) in tRNA + guanine. It participates in tRNA modification; tRNA-queuosine biosynthesis. In terms of biological role, catalyzes the base-exchange of a guanine (G) residue with the queuine precursor 7-aminomethyl-7-deazaguanine (PreQ1) at position 34 (anticodon wobble position) in tRNAs with GU(N) anticodons (tRNA-Asp, -Asn, -His and -Tyr). Catalysis occurs through a double-displacement mechanism. The nucleophile active site attacks the C1' of nucleotide 34 to detach the guanine base from the RNA, forming a covalent enzyme-RNA intermediate. The proton acceptor active site deprotonates the incoming PreQ1, allowing a nucleophilic attack on the C1' of the ribose to form the product. After dissociation, two additional enzymatic reactions on the tRNA convert PreQ1 to queuine (Q), resulting in the hypermodified nucleoside queuosine (7-(((4,5-cis-dihydroxy-2-cyclopenten-1-yl)amino)methyl)-7-deazaguanosine). In Rickettsia prowazekii (strain Madrid E), this protein is Queuine tRNA-ribosyltransferase.